We begin with the raw amino-acid sequence, 89 residues long: Cell division topological specificity factor (89 aa).

The protein belongs to the MinE family.

Prevents the cell division inhibition by proteins MinC and MinD at internal division sites while permitting inhibition at polar sites. This ensures cell division at the proper site by restricting the formation of a division septum at the midpoint of the long axis of the cell. The sequence is that of Cell division topological specificity factor from Heliobacterium modesticaldum (strain ATCC 51547 / Ice1).